We begin with the raw amino-acid sequence, 382 residues long: Histidinol-phosphate aminotransferase (382 aa).

Lys-215 carries the N6-(pyridoxal phosphate)lysine modification. Residues 363–382 (NIDNQSKTHSQTSSIRKGTI) are disordered.

Belongs to the class-II pyridoxal-phosphate-dependent aminotransferase family. Histidinol-phosphate aminotransferase subfamily. In terms of assembly, homodimer. Pyridoxal 5'-phosphate is required as a cofactor.

It carries out the reaction L-histidinol phosphate + 2-oxoglutarate = 3-(imidazol-4-yl)-2-oxopropyl phosphate + L-glutamate. It participates in amino-acid biosynthesis; L-histidine biosynthesis; L-histidine from 5-phospho-alpha-D-ribose 1-diphosphate: step 7/9. In Yersinia pseudotuberculosis serotype O:1b (strain IP 31758), this protein is Histidinol-phosphate aminotransferase.